The chain runs to 323 residues: 4-hydroxy-3-methylbut-2-enyl diphosphate reductase (323 aa).

C12 is a [4Fe-4S] cluster binding site. (2E)-4-hydroxy-3-methylbut-2-enyl diphosphate-binding residues include H43 and H81. H43 and H81 together coordinate dimethylallyl diphosphate. Residues H43 and H81 each coordinate isopentenyl diphosphate. C103 is a binding site for [4Fe-4S] cluster. (2E)-4-hydroxy-3-methylbut-2-enyl diphosphate is bound at residue H131. Residue H131 coordinates dimethylallyl diphosphate. H131 is an isopentenyl diphosphate binding site. The Proton donor role is filled by E133. T170 is a (2E)-4-hydroxy-3-methylbut-2-enyl diphosphate binding site. C198 provides a ligand contact to [4Fe-4S] cluster. (2E)-4-hydroxy-3-methylbut-2-enyl diphosphate is bound by residues S226, N228, and S271. Dimethylallyl diphosphate-binding residues include S226, N228, and S271. Isopentenyl diphosphate-binding residues include S226, N228, and S271.

It belongs to the IspH family. It depends on [4Fe-4S] cluster as a cofactor.

It carries out the reaction isopentenyl diphosphate + 2 oxidized [2Fe-2S]-[ferredoxin] + H2O = (2E)-4-hydroxy-3-methylbut-2-enyl diphosphate + 2 reduced [2Fe-2S]-[ferredoxin] + 2 H(+). The catalysed reaction is dimethylallyl diphosphate + 2 oxidized [2Fe-2S]-[ferredoxin] + H2O = (2E)-4-hydroxy-3-methylbut-2-enyl diphosphate + 2 reduced [2Fe-2S]-[ferredoxin] + 2 H(+). It functions in the pathway isoprenoid biosynthesis; dimethylallyl diphosphate biosynthesis; dimethylallyl diphosphate from (2E)-4-hydroxy-3-methylbutenyl diphosphate: step 1/1. It participates in isoprenoid biosynthesis; isopentenyl diphosphate biosynthesis via DXP pathway; isopentenyl diphosphate from 1-deoxy-D-xylulose 5-phosphate: step 6/6. Catalyzes the conversion of 1-hydroxy-2-methyl-2-(E)-butenyl 4-diphosphate (HMBPP) into a mixture of isopentenyl diphosphate (IPP) and dimethylallyl diphosphate (DMAPP). Acts in the terminal step of the DOXP/MEP pathway for isoprenoid precursor biosynthesis. In Lysinibacillus sphaericus (strain C3-41), this protein is 4-hydroxy-3-methylbut-2-enyl diphosphate reductase.